A 346-amino-acid polypeptide reads, in one-letter code: Alkanal monooxygenase alpha chain (346 aa).

In terms of assembly, heterodimer of an alpha and a beta chain.

It catalyses the reaction a long-chain fatty aldehyde + FMNH2 + O2 = a long-chain fatty acid + hnu + FMN + H2O + 2 H(+). Light-emitting reaction in luminous bacteria. The chain is Alkanal monooxygenase alpha chain (luxA) from Photobacterium phosphoreum.